The following is a 72-amino-acid chain: Translation initiation factor IF-1 (72 aa).

The region spanning 1–72 is the S1-like domain; it reads MAKEESIEIE…SKGRITYRYK (72 aa).

This sequence belongs to the IF-1 family. Component of the 30S ribosomal translation pre-initiation complex which assembles on the 30S ribosome in the order IF-2 and IF-3, IF-1 and N-formylmethionyl-tRNA(fMet); mRNA recruitment can occur at any time during PIC assembly.

The protein resides in the cytoplasm. Its function is as follows. One of the essential components for the initiation of protein synthesis. Stabilizes the binding of IF-2 and IF-3 on the 30S subunit to which N-formylmethionyl-tRNA(fMet) subsequently binds. Helps modulate mRNA selection, yielding the 30S pre-initiation complex (PIC). Upon addition of the 50S ribosomal subunit IF-1, IF-2 and IF-3 are released leaving the mature 70S translation initiation complex. The sequence is that of Translation initiation factor IF-1 from Chlorobium phaeovibrioides (strain DSM 265 / 1930) (Prosthecochloris vibrioformis (strain DSM 265)).